Here is a 283-residue protein sequence, read N- to C-terminus: Pantothenate synthetase (283 aa).

30–37 (MGYLHDGH) serves as a coordination point for ATP. His-37 serves as the catalytic Proton donor. Gln-61 is a (R)-pantoate binding site. Gln-61 provides a ligand contact to beta-alanine. 148-151 (GQKD) contacts ATP. Gln-154 contributes to the (R)-pantoate binding site. Residue 185–188 (MSSR) coordinates ATP.

It belongs to the pantothenate synthetase family. As to quaternary structure, homodimer.

The protein localises to the cytoplasm. It carries out the reaction (R)-pantoate + beta-alanine + ATP = (R)-pantothenate + AMP + diphosphate + H(+). It participates in cofactor biosynthesis; (R)-pantothenate biosynthesis; (R)-pantothenate from (R)-pantoate and beta-alanine: step 1/1. Functionally, catalyzes the condensation of pantoate with beta-alanine in an ATP-dependent reaction via a pantoyl-adenylate intermediate. This chain is Pantothenate synthetase, found in Carboxydothermus hydrogenoformans (strain ATCC BAA-161 / DSM 6008 / Z-2901).